We begin with the raw amino-acid sequence, 425 residues long: Histidine--tRNA ligase 2 (425 aa).

It belongs to the class-II aminoacyl-tRNA synthetase family. Homodimer.

The protein resides in the cytoplasm. It catalyses the reaction tRNA(His) + L-histidine + ATP = L-histidyl-tRNA(His) + AMP + diphosphate + H(+). This Shouchella clausii (strain KSM-K16) (Alkalihalobacillus clausii) protein is Histidine--tRNA ligase 2.